An 872-amino-acid chain; its full sequence is Alanine--tRNA ligase (872 aa).

Zn(2+) contacts are provided by histidine 567, histidine 571, cysteine 669, and histidine 673.

The protein belongs to the class-II aminoacyl-tRNA synthetase family. It depends on Zn(2+) as a cofactor.

It is found in the cytoplasm. It carries out the reaction tRNA(Ala) + L-alanine + ATP = L-alanyl-tRNA(Ala) + AMP + diphosphate. Its function is as follows. Catalyzes the attachment of alanine to tRNA(Ala) in a two-step reaction: alanine is first activated by ATP to form Ala-AMP and then transferred to the acceptor end of tRNA(Ala). Also edits incorrectly charged Ser-tRNA(Ala) and Gly-tRNA(Ala) via its editing domain. This Streptococcus thermophilus (strain CNRZ 1066) protein is Alanine--tRNA ligase.